A 422-amino-acid chain; its full sequence is MSHLFSKACQYFPGGVNSPVRACRAVNITPPIVARASKEVFVDSLDKTFIDFCGSWGSLIHGHSHPKICTAIRQGLERGSSYGLTSEQEILFAEEIFSYLGLETNYKIRFMSTGSEATMTAVRLARGITGRPIIIKFLGCYHGHADTFLQEKPFSHTSLETLDLAHPLTLSLPFNDFPLFQTVMNSLGHKVAGVIFEPVCANMGVILPVPGFIEGVIQTCQQTGSFSIMDEVVTGFRVAQGGAAALYHVKPDILVFGKILGGGLPASAVVTPKDIMDHLAPEGKIFQAGTLSGNPLAMIAGKVSVNLCREQGFYTQLATIEQNFLSPIEHMIRTTGIPVTLVRYGSLFSFFFNPNRPNNLADAQLSDIEAFQKFYQSAFSKGVYLSPSPFEASFLSAAHSMESLDYAQTALIESLEQVFSLV.

Lys258 carries the N6-(pyridoxal phosphate)lysine modification.

This sequence belongs to the class-III pyridoxal-phosphate-dependent aminotransferase family. HemL subfamily. As to quaternary structure, homodimer. Pyridoxal 5'-phosphate serves as cofactor.

It is found in the cytoplasm. The catalysed reaction is (S)-4-amino-5-oxopentanoate = 5-aminolevulinate. It functions in the pathway porphyrin-containing compound metabolism; protoporphyrin-IX biosynthesis; 5-aminolevulinate from L-glutamyl-tRNA(Glu): step 2/2. This chain is Glutamate-1-semialdehyde 2,1-aminomutase, found in Chlamydia trachomatis serovar D (strain ATCC VR-885 / DSM 19411 / UW-3/Cx).